The following is a 154-amino-acid chain: Probable ubiquitin-conjugating enzyme E2 31 (154 aa).

The region spanning 8–153 (KAAQRIAMEY…AREFTARHAN (146 aa)) is the UBC core domain. C91 acts as the Glycyl thioester intermediate in catalysis.

This sequence belongs to the ubiquitin-conjugating enzyme family.

It catalyses the reaction S-ubiquitinyl-[E1 ubiquitin-activating enzyme]-L-cysteine + [E2 ubiquitin-conjugating enzyme]-L-cysteine = [E1 ubiquitin-activating enzyme]-L-cysteine + S-ubiquitinyl-[E2 ubiquitin-conjugating enzyme]-L-cysteine.. It participates in protein modification; protein ubiquitination. Its function is as follows. Accepts the ubiquitin from the E1 complex and catalyzes its covalent attachment to other proteins. The polypeptide is Probable ubiquitin-conjugating enzyme E2 31 (UBC31) (Arabidopsis thaliana (Mouse-ear cress)).